Here is a 181-residue protein sequence, read N- to C-terminus: Acireductone dioxygenase (181 aa).

Fe(2+) is bound by residues His100, His102, Glu106, and His145. The Ni(2+) site is built by His100, His102, Glu106, and His145.

This sequence belongs to the acireductone dioxygenase (ARD) family. As to quaternary structure, monomer. Fe(2+) is required as a cofactor. Requires Ni(2+) as cofactor.

The catalysed reaction is 1,2-dihydroxy-5-(methylsulfanyl)pent-1-en-3-one + O2 = 3-(methylsulfanyl)propanoate + CO + formate + 2 H(+). The enzyme catalyses 1,2-dihydroxy-5-(methylsulfanyl)pent-1-en-3-one + O2 = 4-methylsulfanyl-2-oxobutanoate + formate + 2 H(+). The protein operates within amino-acid biosynthesis; L-methionine biosynthesis via salvage pathway; L-methionine from S-methyl-5-thio-alpha-D-ribose 1-phosphate: step 5/6. In terms of biological role, catalyzes 2 different reactions between oxygen and the acireductone 1,2-dihydroxy-3-keto-5-methylthiopentene (DHK-MTPene) depending upon the metal bound in the active site. Fe-containing acireductone dioxygenase (Fe-ARD) produces formate and 2-keto-4-methylthiobutyrate (KMTB), the alpha-ketoacid precursor of methionine in the methionine recycle pathway. Ni-containing acireductone dioxygenase (Ni-ARD) produces methylthiopropionate, carbon monoxide and formate, and does not lie on the methionine recycle pathway. This Trichodesmium erythraeum (strain IMS101) protein is Acireductone dioxygenase.